Reading from the N-terminus, the 192-residue chain is Ion-translocating oxidoreductase complex subunit A (192 aa).

6 consecutive transmembrane segments (helical) span residues 5–25 (FLLFIGTVLVNNFVLVKFLGL), 39–59 (VGMSFATTFVLTLTAAVSYIV), 63–83 (ILLPLDLVYLQTIGFILVIAV), 102–122 (LLGIFLPLITTNCAILGLALL), 134–154 (IIYGFSAGVGFSLVLVVFSSM), and 171–191 (SIAMITAGLMSLAFMGFTGLI).

The protein belongs to the NqrDE/RnfAE family. The complex is composed of six subunits: RnfA, RnfB, RnfC, RnfD, RnfE and RnfG.

It is found in the cell inner membrane. Part of a membrane-bound complex that couples electron transfer with translocation of ions across the membrane. The polypeptide is Ion-translocating oxidoreductase complex subunit A (Psychromonas ingrahamii (strain DSM 17664 / CCUG 51855 / 37)).